A 223-amino-acid polypeptide reads, in one-letter code: Ribonuclease DdI (223 aa).

A signal peptide spans 1–25 (MRLIAALLSVLLIASTAQSTVTIYE). A disulfide bridge links cysteine 46 with cysteine 51. Residues histidine 63, glutamate 113, and histidine 117 contribute to the active site. A disulfide bridge links cysteine 78 with cysteine 120. N-linked (GlcNAc...) asparagine glycosylation occurs at asparagine 144. 2 disulfide bridges follow: cysteine 183/cysteine 213 and cysteine 194/cysteine 205.

It belongs to the RNase T2 family.

The protein localises to the lysosome. The enzyme catalyses a ribonucleotidyl-ribonucleotide-RNA + H2O = a 3'-end 3'-phospho-ribonucleotide-RNA + a 5'-end dephospho-ribonucleoside-RNA + H(+). Its activity is regulated as follows. Inhibited by Cu(2+) and Zn(2+). Releases mononucleotides from RNA in the order of 3'-GMP &gt; 3'-UMP &gt; 3'-AMP &gt; 3'-CMP. The protein is Ribonuclease DdI (ddiA) of Dictyostelium discoideum (Social amoeba).